The following is a 580-amino-acid chain: Peptide transporter PTR_B (580 aa).

Basic and acidic residues predominate over residues 1–30 (MSTEKLQNDDKVVDEKYVDADEHSLVRSQD). The interval 1 to 45 (MSTEKLQNDDKVVDEKYVDADEHSLVRSQDESFPQTEEGGEPTDH) is disordered. The chain crosses the membrane as a helical span at residues 57-78 (IPMSCWLVAIVELSERFTYYGL). A glycan (N-linked (GlcNAc...) asparagine) is linked at asparagine 101. 11 consecutive transmembrane segments (helical) span residues 107–127 (ALSYFWQFWCYVTPIFGAWIA), 134–154 (YFTICIFCIVMMVGIFILFIT), 163–183 (TTSLAGFIVAVIVIGIGTGGI), 219–239 (VSNVFMFFYLMINIGALSVIA), 249–269 (FWAAFLLPLCFFCVGILALVL), 326–346 (ALYACKVFAFYPIYWLVYGQM), 370–390 (INSITLIIFIPICERIVYPFI), 402–422 (IFWGFMFGAAAMVYAGVLQHF), 449–469 (IALQTPCYWLIGMSEIFASIT), 484–504 (SFIMSIFLLMNAFGSALGIAL), and 513–533 (MVWTFNGLGVSCFIAGWIFWF).

The protein belongs to the major facilitator superfamily. Proton-dependent oligopeptide transporter (POT/PTR) (TC 2.A.17) family.

It localises to the cell membrane. The catalysed reaction is a dipeptide(out) + H(+)(out) = a dipeptide(in) + H(+)(in). The enzyme catalyses an L-amino acid tripeptide(out) + H(+)(out) = an L-amino acid tripeptide(in) + H(+)(in). Its function is as follows. Peptide transporter that exploits the inwardly directed proton motive force to facilitate the cellular uptake of di/tripeptides. Shows strong uptake specificity towards the dipeptides Tyr-Phe and Gly-His, when compared to PTR_A and PTR_C. This is Peptide transporter PTR_B from Candidozyma auris (Yeast).